A 628-amino-acid polypeptide reads, in one-letter code: MGSCARLLLLWGCTVVAAGLSGVAGVSSRCEKACNPRMGNLALGRKLWADTTCGQNATELYCFYSENTDLTCRQPKCDKCNAAHPHLAHLPSAMADSSFRFPRTWWQSAEDVHREKIQLDLEAEFYFTHLIMMFKSPRPAAMVLDRSQDFGKTWKPYKYFATNCSATFGLEDDVVKKGAICTSKYSSPFPCTGGEVIFKALSPPYDTENPYSAKVQEQLKITNLRVQLLKRQSCPCQRNDLNDEPQHFTHYAIYDFIVKGSCFCNGHADQCIPVHGFRPVKAPGTFHMVHGKCMCKHNTAGSHCQHCAPLYNDQPWEAADGKTGAPNECRTCKCNGHADTCHFDVNVWEASGNRSGGVCDDCQHNTEGQHCQRCKPGFYRDLRRPFSAPDACKPCSCHPVGSAVLPANSVTFCDPSNGDCPCKPGVAGRHCDRCMVGYWGFGDYGCRPCDCAGSCDPITGDCISSHTDIDWHHEFPDFRPVHNKSEAAWEWEDAQGFSALLHSGKCECKEQTLGNAKAFCGMKYSYVLKIKILSAHDKGTHVEVNVKIKKVLKSTKLKIFRGKRTLYPESWTDRGCTCPILNPGLEYLVAGHEDVRTGKLIVNMKSFVQHWKPSLGRKVMDILKRECK.

Positions 1–18 (MGSCARLLLLWGCTVVAA) are cleaved as a signal peptide. In terms of domain architecture, Laminin N-terminal spans 30–261 (CEKACNPRMG…AIYDFIVKGS (232 aa)). N-linked (GlcNAc...) asparagine glycans are attached at residues N56 and N163. Disulfide bonds link C262–C271, C264–C293, C295–C304, C307–C329, C332–C341, C334–C359, C362–C371, C374–C392, C395–C413, C397–C420, C422–C431, and C434–C446. 3 Laminin EGF-like domains span residues 262–331 (CFCN…ECRT), 332–394 (CKCN…ACKP), and 395–448 (CSCH…GCRP). An N-linked (GlcNAc...) asparagine glycan is attached at N353. A glycan (N-linked (GlcNAc...) asparagine) is linked at N483. Disulfide bonds link C506/C576 and C520/C627. Positions 506–627 (CECKEQTLGN…KVMDILKREC (122 aa)) constitute an NTR domain.

In terms of assembly, may form a homodimer.

The protein localises to the secreted. The protein resides in the extracellular space. It localises to the extracellular matrix. In terms of biological role, may play an important role in neural, kidney and vascular development. The sequence is that of Netrin-4 (NTN4) from Pongo abelii (Sumatran orangutan).